Here is a 320-residue protein sequence, read N- to C-terminus: Replication-associated protein ORF2 (320 aa).

Catalysis depends on O-(5'-phospho-DNA)-tyrosine intermediate residues tyrosine 188 and tyrosine 192.

The protein belongs to the microviridae Rep protein family.

It catalyses the reaction ATP + (deoxyribonucleotide)n-3'-hydroxyl + 5'-phospho-(deoxyribonucleotide)m = (deoxyribonucleotide)n+m + AMP + diphosphate.. Plays an essential role in viral DNA replication. Binds the origin of replication and cleaves the dsDNA replicative form I (RFI) and becomes covalently bound to it via phosphotyrosine bond, generating the dsDNA replicative form II (RFII). In turn, viral DNA replication initiates at the 3'-OH of the cleavage site. After one round of rolling circle synthesis, protein ORF2 is linked to the newly synthesized ssDNA and joins the ends of the displaced strand to generate a circular single-stranded molecule ready to be packed into a virion. This chain is Replication-associated protein ORF2, found in Spiroplasma virus 4 (SpV4).